A 183-amino-acid polypeptide reads, in one-letter code: Ribulose bisphosphate carboxylase small subunit, chloroplastic 1 (183 aa).

Residues 1 to 58 constitute a chloroplast transit peptide; that stretch reads MASSMLSNAAMATTAATAGAQASMVAPFNGLKSFATFPITKKSSNDFSSLPSNGGRVQ.

Belongs to the RuBisCO small chain family. Heterohexadecamer of 8 large and 8 small subunits.

The protein localises to the plastid. It is found in the chloroplast. Functionally, ruBisCO catalyzes two reactions: the carboxylation of D-ribulose 1,5-bisphosphate, the primary event in carbon dioxide fixation, as well as the oxidative fragmentation of the pentose substrate. Both reactions occur simultaneously and in competition at the same active site. Although the small subunit is not catalytic it is essential for maximal activity. The chain is Ribulose bisphosphate carboxylase small subunit, chloroplastic 1 from Amaranthus hypochondriacus (Prince-of-Wales feather).